Here is a 213-residue protein sequence, read N- to C-terminus: Thymidylate kinase (213 aa).

Glycine 10–threonine 17 serves as a coordination point for ATP.

The protein belongs to the thymidylate kinase family.

The enzyme catalyses dTMP + ATP = dTDP + ADP. Phosphorylation of dTMP to form dTDP in both de novo and salvage pathways of dTTP synthesis. This Escherichia fergusonii (strain ATCC 35469 / DSM 13698 / CCUG 18766 / IAM 14443 / JCM 21226 / LMG 7866 / NBRC 102419 / NCTC 12128 / CDC 0568-73) protein is Thymidylate kinase.